We begin with the raw amino-acid sequence, 347 residues long: Large ribosomal subunit protein uL3 (347 aa).

The protein belongs to the universal ribosomal protein uL3 family. Part of the 50S ribosomal subunit. Forms a cluster with proteins L14 and L24e.

In terms of biological role, one of the primary rRNA binding proteins, it binds directly near the 3'-end of the 23S rRNA, where it nucleates assembly of the 50S subunit. The protein is Large ribosomal subunit protein uL3 of Caldivirga maquilingensis (strain ATCC 700844 / DSM 13496 / JCM 10307 / IC-167).